An 869-amino-acid polypeptide reads, in one-letter code: TATA box-binding protein-associated factor RNA polymerase I subunit C (869 aa).

2 disordered regions span residues 605 to 629 (SSLR…ASWT) and 729 to 869 (GAAW…RMGF). Thr834 is subject to Phosphothreonine. The span at 835 to 860 (PPHSQASSVRATRSQQHTPVLSSSQP) shows a compositional bias: polar residues. Ser848 carries the phosphoserine modification.

As to quaternary structure, component of the transcription factor SL1/TIF-IB complex, composed of TBP and at least TAF1A, TAF1B, TAF1C and TAF1D. In the complex interacts directly with TBP, TAF1A and TAF1B. Interaction of the SL1/TIF-IB subunits with TBP excludes interaction of TBP with the transcription factor IID (TFIID) subunits. Interacts with MYC and RRN3. Interacts with p53/TP53; the interaction prevents the association of SL1/TIF-IB with UBTF and represses RNA polymerase I transcription. Part of Pol I pre-initiation complex (PIC), in which Pol I core assembles with RRN3 and promoter-bound UTBF and SL1/TIF-IB complex.

It is found in the nucleus. The protein resides in the nucleolus. In terms of biological role, component of the transcription factor SL1/TIF-IB complex, which is involved in the assembly of the PIC (pre-initiation complex) during RNA polymerase I-dependent transcription. The rate of PIC formation probably is primarily dependent on the rate of association of SL1/TIF-IB with the rDNA promoter. SL1/TIF-IB is involved in stabilization of nucleolar transcription factor 1/UBTF on rDNA. Formation of SL1/TIF-IB excludes the association of TBP with TFIID subunits. Recruits RNA polymerase I to the rRNA gene promoter via interaction with RRN3. In Homo sapiens (Human), this protein is TATA box-binding protein-associated factor RNA polymerase I subunit C (TAF1C).